The following is a 562-amino-acid chain: Dihydroxy-acid dehydratase (562 aa).

C55 is a [2Fe-2S] cluster binding site. D87 contributes to the Mg(2+) binding site. [2Fe-2S] cluster is bound at residue C128. Mg(2+) contacts are provided by D129 and K130. K130 carries the N6-carboxylysine modification. Residue C200 coordinates [2Fe-2S] cluster. Residue E451 participates in Mg(2+) binding. S477 serves as the catalytic Proton acceptor.

It belongs to the IlvD/Edd family. Homodimer. Requires [2Fe-2S] cluster as cofactor. The cofactor is Mg(2+).

It catalyses the reaction (2R)-2,3-dihydroxy-3-methylbutanoate = 3-methyl-2-oxobutanoate + H2O. It carries out the reaction (2R,3R)-2,3-dihydroxy-3-methylpentanoate = (S)-3-methyl-2-oxopentanoate + H2O. The protein operates within amino-acid biosynthesis; L-isoleucine biosynthesis; L-isoleucine from 2-oxobutanoate: step 3/4. Its pathway is amino-acid biosynthesis; L-valine biosynthesis; L-valine from pyruvate: step 3/4. In terms of biological role, functions in the biosynthesis of branched-chain amino acids. Catalyzes the dehydration of (2R,3R)-2,3-dihydroxy-3-methylpentanoate (2,3-dihydroxy-3-methylvalerate) into 2-oxo-3-methylpentanoate (2-oxo-3-methylvalerate) and of (2R)-2,3-dihydroxy-3-methylbutanoate (2,3-dihydroxyisovalerate) into 2-oxo-3-methylbutanoate (2-oxoisovalerate), the penultimate precursor to L-isoleucine and L-valine, respectively. The sequence is that of Dihydroxy-acid dehydratase from Cytophaga hutchinsonii (strain ATCC 33406 / DSM 1761 / CIP 103989 / NBRC 15051 / NCIMB 9469 / D465).